The following is a 95-amino-acid chain: Small ribosomal subunit protein bS20 (95 aa).

Residues 1-22 (MANIKSQIKRNRTNENNRLRNK) form a disordered region. The segment covering 12-22 (RTNENNRLRNK) has biased composition (basic and acidic residues).

The protein belongs to the bacterial ribosomal protein bS20 family.

Binds directly to 16S ribosomal RNA. This is Small ribosomal subunit protein bS20 from Tropheryma whipplei (strain TW08/27) (Whipple's bacillus).